Consider the following 119-residue polypeptide: Small ribosomal subunit protein uS13m (119 aa).

The protein belongs to the universal ribosomal protein uS13 family. Component of the mitochondrial small ribosomal subunit (mt-SSU). Mature N.crassa 74S mitochondrial ribosomes consist of a small (37S) and a large (54S) subunit. The 37S small subunit contains a 16S ribosomal RNA (16S mt-rRNA) and 32 different proteins. The 54S large subunit contains a 23S rRNA (23S mt-rRNA) and 42 different proteins.

The protein resides in the mitochondrion. Functionally, component of the mitochondrial ribosome (mitoribosome), a dedicated translation machinery responsible for the synthesis of mitochondrial genome-encoded proteins, including at least some of the essential transmembrane subunits of the mitochondrial respiratory chain. The mitoribosomes are attached to the mitochondrial inner membrane and translation products are cotranslationally integrated into the membrane. This chain is Small ribosomal subunit protein uS13m (sws2), found in Neurospora crassa (strain ATCC 24698 / 74-OR23-1A / CBS 708.71 / DSM 1257 / FGSC 987).